A 374-amino-acid chain; its full sequence is Erythronate-4-phosphate dehydrogenase (374 aa).

Substrate contacts are provided by Ser-53 and Thr-75. Asp-160 lines the NAD(+) pocket. Arg-222 is a catalytic residue. NAD(+) is bound at residue Asp-246. Glu-251 is a catalytic residue. Residue His-268 is the Proton donor of the active site. Gly-271 is a binding site for NAD(+). Substrate is bound at residue Tyr-272.

Belongs to the D-isomer specific 2-hydroxyacid dehydrogenase family. PdxB subfamily. Homodimer.

The protein resides in the cytoplasm. The enzyme catalyses 4-phospho-D-erythronate + NAD(+) = (R)-3-hydroxy-2-oxo-4-phosphooxybutanoate + NADH + H(+). It participates in cofactor biosynthesis; pyridoxine 5'-phosphate biosynthesis; pyridoxine 5'-phosphate from D-erythrose 4-phosphate: step 2/5. Functionally, catalyzes the oxidation of erythronate-4-phosphate to 3-hydroxy-2-oxo-4-phosphonooxybutanoate. The polypeptide is Erythronate-4-phosphate dehydrogenase (Psychrobacter sp. (strain PRwf-1)).